We begin with the raw amino-acid sequence, 281 residues long: NADPH-dependent 7-cyano-7-deazaguanine reductase (281 aa).

Residue 81 to 83 (IES) coordinates substrate. 83–84 (SK) contributes to the NADPH binding site. The active-site Thioimide intermediate is the Cys188. The Proton donor role is filled by Asp195. 227 to 228 (HE) is a binding site for substrate. An NADPH-binding site is contributed by 256–257 (RG).

This sequence belongs to the GTP cyclohydrolase I family. QueF type 2 subfamily. In terms of assembly, homodimer.

It localises to the cytoplasm. It catalyses the reaction 7-aminomethyl-7-carbaguanine + 2 NADP(+) = 7-cyano-7-deazaguanine + 2 NADPH + 3 H(+). It functions in the pathway tRNA modification; tRNA-queuosine biosynthesis. Functionally, catalyzes the NADPH-dependent reduction of 7-cyano-7-deazaguanine (preQ0) to 7-aminomethyl-7-deazaguanine (preQ1). The polypeptide is NADPH-dependent 7-cyano-7-deazaguanine reductase (Paracidovorax citrulli (strain AAC00-1) (Acidovorax citrulli)).